Here is a 96-residue protein sequence, read N- to C-terminus: Co-chaperonin GroES (96 aa).

Belongs to the GroES chaperonin family. As to quaternary structure, heptamer of 7 subunits arranged in a ring. Interacts with the chaperonin GroEL.

It localises to the cytoplasm. Together with the chaperonin GroEL, plays an essential role in assisting protein folding. The GroEL-GroES system forms a nano-cage that allows encapsulation of the non-native substrate proteins and provides a physical environment optimized to promote and accelerate protein folding. GroES binds to the apical surface of the GroEL ring, thereby capping the opening of the GroEL channel. The chain is Co-chaperonin GroES from Nitrosomonas eutropha (strain DSM 101675 / C91 / Nm57).